Consider the following 126-residue polypeptide: C-type natriuretic peptide (126 aa).

Residues M1–A23 form the signal peptide. The segment at P20–L71 is disordered. A propeptide spanning residues K24–R73 is cleaved from the precursor. Residues G26–P35 are compositionally biased toward pro residues. The segment covering A46–N63 has biased composition (gly residues). C110 and C126 are joined by a disulfide.

It belongs to the natriuretic peptide family. Degraded by IDE (in vitro). As to expression, in the kidney, predominantly expressed in the distal tubular cells (at protein level).

It localises to the secreted. Its function is as follows. Hormone which plays a role in endochondral ossification through regulation of cartilaginous growth plate chondrocytes proliferation and differentiation. May also be vasoactive and natriuretic. Acts by specifically binding and stimulating NPR2 to produce cGMP. Binds the clearance receptor NPR3. The polypeptide is C-type natriuretic peptide (NPPC) (Homo sapiens (Human)).